The sequence spans 302 residues: MNTPNINQIKSFFLSLQDEICQQLEQIDGKEKFTEQCWQREEGGGGRSRIMKEGTIFEQAGANFSHVSGDMLPLSATAHRPELVGRHYQAMGVSLVIHPLNPYIPTSHANVRFFIAEKEGEAPVWWFGGGFDLTPYYGFKEDAIHWHTTARNICRPYGEDVYPKYKEWCDNYFYIKHRNEARGIGGLFYDDLNTPDFEHCFNFTQDIGKGFLSAYLPIVEKRKEILWGERERQFQLYRRGRYVEFNLVWDRGTLFGLQSGGRTESILMSMPPLARWEHDYHPEPESAEAALYTDFLPAKNWI.

S94 is a substrate binding site. A divalent metal cation contacts are provided by H98 and H108. The active-site Proton donor is H108. 110–112 lines the substrate pocket; that stretch reads NVR. Residues H147 and H177 each coordinate a divalent metal cation. Residues 242–277 are important for dimerization; the sequence is YVEFNLVWDRGTLFGLQSGGRTESILMSMPPLARWE. 260-262 is a binding site for substrate; it reads GGR.

The protein belongs to the aerobic coproporphyrinogen-III oxidase family. As to quaternary structure, homodimer. A divalent metal cation serves as cofactor.

The protein resides in the cytoplasm. It carries out the reaction coproporphyrinogen III + O2 + 2 H(+) = protoporphyrinogen IX + 2 CO2 + 2 H2O. It participates in porphyrin-containing compound metabolism; protoporphyrin-IX biosynthesis; protoporphyrinogen-IX from coproporphyrinogen-III (O2 route): step 1/1. In terms of biological role, involved in the heme biosynthesis. Catalyzes the aerobic oxidative decarboxylation of propionate groups of rings A and B of coproporphyrinogen-III to yield the vinyl groups in protoporphyrinogen-IX. The sequence is that of Oxygen-dependent coproporphyrinogen-III oxidase from Photorhabdus laumondii subsp. laumondii (strain DSM 15139 / CIP 105565 / TT01) (Photorhabdus luminescens subsp. laumondii).